Here is a 578-residue protein sequence, read N- to C-terminus: mRNA-decapping enzyme 1B (578 aa).

N-acetylalanine is present on Ala2. Ser144 and Ser145 each carry phosphoserine. 2 disordered regions span residues 187-222 (AICD…PEPQ) and 246-265 (RTFA…TRPV). Residues 248-257 (FAHHHHHHHQ) are compositionally biased toward basic residues. 2 positions are modified to phosphoserine: Ser274 and Ser335. At Thr380 the chain carries Phosphothreonine.

This sequence belongs to the DCP1 family. Interacts with DCP1A.

Its subcellular location is the cytoplasm. The protein localises to the nucleus. It carries out the reaction a 5'-end (N(7)-methyl 5'-triphosphoguanosine)-ribonucleoside in mRNA + H2O = N(7)-methyl-GDP + a 5'-end phospho-ribonucleoside in mRNA + 2 H(+). Its function is as follows. May play a role in the degradation of mRNAs, both in normal mRNA turnover and in nonsense-mediated mRNA decay. May remove the 7-methyl guanine cap structure from mRNA molecules, yielding a 5'-phosphorylated mRNA fragment and 7m-GDP. This Mus musculus (Mouse) protein is mRNA-decapping enzyme 1B (Dcp1b).